Consider the following 379-residue polypeptide: Glutamate 5-kinase (379 aa).

Residue K19 participates in ATP binding. Substrate is bound by residues S59, D146, and N158. Residue 178 to 179 (TD) participates in ATP binding. In terms of domain architecture, PUA spans 285 to 363 (RGAVTVDAGA…SEFERLLGYV (79 aa)).

It belongs to the glutamate 5-kinase family.

It localises to the cytoplasm. It carries out the reaction L-glutamate + ATP = L-glutamyl 5-phosphate + ADP. It functions in the pathway amino-acid biosynthesis; L-proline biosynthesis; L-glutamate 5-semialdehyde from L-glutamate: step 1/2. Its function is as follows. Catalyzes the transfer of a phosphate group to glutamate to form L-glutamate 5-phosphate. This chain is Glutamate 5-kinase, found in Variovorax paradoxus (strain S110).